A 296-amino-acid polypeptide reads, in one-letter code: MSWINRIFSKSPSSSTRKANVPEGVWTKCTSCEQVLYSEELKRNLYVCPKCGHHMRIDARERLLKLLDEGSSQEIAADLEPKDILKFKDLKKYKDRINAAQKETGEKDALITMTGTLYDMPIVVAASNFAFMGGSMGSVVGAKFVKAAEKAMEMNCPFVCFSASGGARMQEALFSLMQMAKTSAVLAQMREKGVPFISVLADPTLGGVSASFAMLGDLNIAEPKALIGFAGPRVIEQTVREKLPEGFQRSEFLLEKGAIDMIVKRSEMRQTLASVLSKLTNQPSPFVEPELISEDE.

Residues 25-294 (VWTKCTSCEQ…PFVEPELISE (270 aa)) form the CoA carboxyltransferase N-terminal domain. Positions 29, 32, 48, and 51 each coordinate Zn(2+). The C4-type zinc finger occupies 29-51 (CTSCEQVLYSEELKRNLYVCPKC).

This sequence belongs to the AccD/PCCB family. As to quaternary structure, acetyl-CoA carboxylase is a heterohexamer composed of biotin carboxyl carrier protein (AccB), biotin carboxylase (AccC) and two subunits each of ACCase subunit alpha (AccA) and ACCase subunit beta (AccD). Requires Zn(2+) as cofactor.

The protein localises to the cytoplasm. It catalyses the reaction N(6)-carboxybiotinyl-L-lysyl-[protein] + acetyl-CoA = N(6)-biotinyl-L-lysyl-[protein] + malonyl-CoA. Its pathway is lipid metabolism; malonyl-CoA biosynthesis; malonyl-CoA from acetyl-CoA: step 1/1. In terms of biological role, component of the acetyl coenzyme A carboxylase (ACC) complex. Biotin carboxylase (BC) catalyzes the carboxylation of biotin on its carrier protein (BCCP) and then the CO(2) group is transferred by the transcarboxylase to acetyl-CoA to form malonyl-CoA. The sequence is that of Acetyl-coenzyme A carboxylase carboxyl transferase subunit beta from Haemophilus influenzae (strain PittEE).